The following is a 716-amino-acid chain: MGCGGSSGASDPSSEKINWNNAEIHDEFKQEQKKAGAKRKAFDKTTGKAVEKERTAADREFDFFEGADAGSGEQFMAVRPYEGAIVEPAQHNEPSKDAPDVTYDLEYVYGYRAEDSRMNCFYNKNGNVCYFTAALGVVLDQDKNTQKFFGGGQTDNTSKMVARDDMYHTNDITAMDMSNCRTLCATGQNGSVPVAFVWDAATGAKKGRYKLDKGGREVTAIAIDPKKKYVAICANDNDHQLYIFDIDKGTQVKKDKSGPDRIFHMAWSLKDGDSVVATAGEKHFAIWNLGADSFKKKKGIYGDKGKPTSHSCVCWDDAGNAYSGGANSSIYVWSGQNLTSTYDVHGKGFVGAIRWCDGKIISGGKDGQIIISNPADGKAEKTIDVGELVRSVDMKGGKIVAGLRNGTILEIDSKGTKKEIMKSHSDGEAWGLAVADKDTFVTSGDDNKIYVWDLKNRKSTALAEICNEDKNSKAGGASSLTEYAPSKCGRSVAVNVGGNGNVAVGHNDGRVTIRGGVKSIDKVTKTLTDSGEWIECMAYSPDGSMLAVGSHDNNIYIYSSADYSKLGTLKAHNSFIVSLDWSSDGTYIRSVCGAHELLFFTVEDFKQDPSGATNTVETTWHTNSAKYGWLVSGIFPAGTDGTHINHVDFSSSGSLIVTADDYGLVNVWRNPARAGATPVSLRGHSEHVVRTYFTQGESYILSIGGYDKTIMQWKKK.

The interval 1 to 53 (MGCGGSSGASDPSSEKINWNNAEIHDEFKQEQKKAGAKRKAFDKTTGKAVEKE) is disordered. A compositionally biased stretch (polar residues) spans 8–21 (GASDPSSEKINWNN). Basic and acidic residues predominate over residues 23–53 (EIHDEFKQEQKKAGAKRKAFDKTTGKAVEKE). WD repeat units lie at residues 167–208 (YHTN…KKGR), 213–254 (KGGR…QVKK), 257–297 (SGPD…FKKK), 305–343 (GKPT…STYD), 345–382 (HGKG…AEKT), 424–462 (HSDG…STAL), 529–568 (DSGE…KLGT), 571–610 (AHNS…QDPS), 639–678 (TDGT…GATP), and 683–715 (GHSE…QWKK).

Belongs to the WD repeat EMAP family.

The chain is Ciliary WD repeat-containing protein ctxp80 from Euplotoides octocarinatus (Freshwater ciliate).